Consider the following 578-residue polypeptide: Vi polysaccharide biosynthesis protein VipC/TviE (578 aa).

The protein operates within glycan metabolism; Vi-antigen biosynthesis. It participates in capsule biogenesis; capsule polysaccharide biosynthesis. This Salmonella typhi protein is Vi polysaccharide biosynthesis protein VipC/TviE (vipC).